We begin with the raw amino-acid sequence, 383 residues long: ATP phosphoribosyltransferase regulatory subunit (383 aa).

It belongs to the class-II aminoacyl-tRNA synthetase family. HisZ subfamily. In terms of assembly, heteromultimer composed of HisG and HisZ subunits.

It localises to the cytoplasm. The protein operates within amino-acid biosynthesis; L-histidine biosynthesis; L-histidine from 5-phospho-alpha-D-ribose 1-diphosphate: step 1/9. Functionally, required for the first step of histidine biosynthesis. May allow the feedback regulation of ATP phosphoribosyltransferase activity by histidine. The sequence is that of ATP phosphoribosyltransferase regulatory subunit from Paraburkholderia phytofirmans (strain DSM 17436 / LMG 22146 / PsJN) (Burkholderia phytofirmans).